A 486-amino-acid chain; its full sequence is Corytuberine synthase (486 aa).

A helical transmembrane segment spans residues A6–L21. Residue C428 coordinates heme.

Belongs to the cytochrome P450 family. The cofactor is heme.

It is found in the endoplasmic reticulum membrane. It carries out the reaction (S)-reticuline + reduced [NADPH--hemoprotein reductase] + O2 = (S)-corytuberine + oxidized [NADPH--hemoprotein reductase] + 2 H2O + 2 H(+). Its activity is regulated as follows. Inhibited by ketoconazole. Cytochrome P450 that catalyzes an intramolecular C-C phenol coupling of (S)-reticuline in magnoflorine biosynthesis. Catalyzes the formation of (S)-corytuberine from (S)-reticuline, and also, with a lover efficiency, the 4'-O-demethylation of codamine to produce orientaline, and subsequent C-C-phenol coupling of orientaline. Can also use (R,S)-norreticuline, (R,S)-orientaline, (S)-N-methylcoclaurine and (S)-coclaurine as substrates, but not (R,S)-6-O-methyllaudanosoline, (R,S)-6-O-methylnorlaudanosoline, (R,S)-laudanine, (R,S)-norlaudanine, (R,S)-4'-O-methyllaudanosoline, (R,S)-pseudocodamine, (R,S)-norpseudocodamine, (R,S)-laudanosine, (R,S)-norlaudanosine, (R,S)-laudanosoline or (R,S)-norlaudanosoline. The polypeptide is Corytuberine synthase (Coptis japonica (Japanese goldthread)).